The sequence spans 757 residues: Neutral ceramidase 2 (757 aa).

The signal sequence occupies residues 1–25 (MAVSLPLFQFILFLLLLLLSRTVYA). The N-linked (GlcNAc...) asparagine glycan is linked to asparagine 311. Serine 330 functions as the Nucleophile in the catalytic mechanism. 2 N-linked (GlcNAc...) asparagine glycosylation sites follow: asparagine 348 and asparagine 657.

It belongs to the neutral ceramidase family.

The protein localises to the secreted. It localises to the endoplasmic reticulum. Its subcellular location is the golgi apparatus. It catalyses the reaction an N-acylsphing-4-enine + H2O = sphing-4-enine + a fatty acid. In terms of biological role, hydrolyzes the sphingolipid ceramide into sphingosine and free fatty acid. In Arabidopsis thaliana (Mouse-ear cress), this protein is Neutral ceramidase 2.